The following is a 393-amino-acid chain: S-adenosylmethionine synthase 2 (393 aa).

E9 is a Mg(2+) binding site. H15 contacts ATP. E43 contacts K(+). Positions 56 and 99 each coordinate L-methionine. Residues 167 to 169 (DGK), 235 to 238 (SGRF), D246, 252 to 253 (RK), A269, K273, and K277 contribute to the ATP site. D246 serves as a coordination point for L-methionine. K277 lines the L-methionine pocket.

The protein belongs to the AdoMet synthase family. In terms of assembly, homotetramer. Requires Mn(2+) as cofactor. Mg(2+) serves as cofactor. Co(2+) is required as a cofactor. It depends on K(+) as a cofactor. In terms of tissue distribution, mostly expressed in roots. Also present in stems and leaves.

The protein localises to the cytoplasm. It carries out the reaction L-methionine + ATP + H2O = S-adenosyl-L-methionine + phosphate + diphosphate. Its pathway is amino-acid biosynthesis; S-adenosyl-L-methionine biosynthesis; S-adenosyl-L-methionine from L-methionine: step 1/1. In terms of biological role, catalyzes the formation of S-adenosylmethionine from methionine and ATP. The reaction comprises two steps that are both catalyzed by the same enzyme: formation of S-adenosylmethionine (AdoMet) and triphosphate, and subsequent hydrolysis of the triphosphate. The polypeptide is S-adenosylmethionine synthase 2 (SAM2) (Solanum lycopersicum (Tomato)).